Consider the following 149-residue polypeptide: Ribosome-binding factor A (149 aa).

Residues 123–149 (LAKLREGAAPAGDADPYKTSSKSESEE) form a disordered region.

This sequence belongs to the RbfA family. As to quaternary structure, monomer. Binds 30S ribosomal subunits, but not 50S ribosomal subunits or 70S ribosomes.

It is found in the cytoplasm. In terms of biological role, one of several proteins that assist in the late maturation steps of the functional core of the 30S ribosomal subunit. Associates with free 30S ribosomal subunits (but not with 30S subunits that are part of 70S ribosomes or polysomes). Required for efficient processing of 16S rRNA. May interact with the 5'-terminal helix region of 16S rRNA. This chain is Ribosome-binding factor A, found in Corynebacterium glutamicum (strain ATCC 13032 / DSM 20300 / JCM 1318 / BCRC 11384 / CCUG 27702 / LMG 3730 / NBRC 12168 / NCIMB 10025 / NRRL B-2784 / 534).